Consider the following 256-residue polypeptide: 4-oxalocrotonate decarboxylase (256 aa).

Belongs to the hydratase/decarboxylase family. As to quaternary structure, forms a complex with AmnF. Mg(2+) serves as cofactor. Requires Mn(2+) as cofactor.

It catalyses the reaction (3E)-2-oxohex-3-enedioate + H(+) = 2-oxopent-4-enoate + CO2. Its activity is regulated as follows. Strongly inhibited by Fe(2+), Fe(3+), K(3)[Fe(CN)(6)], Ag(+) and Cu(2+). In terms of biological role, involved in the modified meta-cleavage pathway for the 2-aminophenol catabolism. The chain is 4-oxalocrotonate decarboxylase (amnE) from Pseudomonas sp.